Here is a 253-residue protein sequence, read N- to C-terminus: Alpha-acetolactate decarboxylase (253 aa).

Belongs to the alpha-acetolactate decarboxylase family.

The enzyme catalyses (2S)-2-acetolactate + H(+) = (R)-acetoin + CO2. The protein operates within polyol metabolism; (R,R)-butane-2,3-diol biosynthesis; (R,R)-butane-2,3-diol from pyruvate: step 2/3. Its function is as follows. Converts acetolactate into acetoin. The polypeptide is Alpha-acetolactate decarboxylase (alsD) (Bacillus licheniformis (strain ATCC 14580 / DSM 13 / JCM 2505 / CCUG 7422 / NBRC 12200 / NCIMB 9375 / NCTC 10341 / NRRL NRS-1264 / Gibson 46)).